We begin with the raw amino-acid sequence, 385 residues long: MAAAAARWNHVWVGTETGILKGVNLQRKQAANFTAGGQPRREEAVSALCWGTGGETQMLVGCADRTVKHFSTEDGIFQGQRHCPGGEGMFRGLAQADGTLITCVDSGILRVWHDKDKDTSSDPLLELRVGPGVCRMRQDPAHPHVVATGGKENALKIWDLQGSEEPVFRAKNVRNDWLDLRVPIWDQDIQFLPGSQKLVTCTGYHQVRVYDPASPQRRPVLETTYGEYPLTAMTLTPGGNSVIVGNTHGQLAEIDLRQGRLLGCLKGLAGSVRGLQCHPSKPLLASCGLDRVLRIHRIQNPRGLEHKVYLKSQLNCLLLSGRDNWEDEPQEPQEPNKVPLEDTETDELWASLEAAAKRKLSGLEQPQGALQTRRRKKKRPGSTSP.

WD repeat units follow at residues R40 to Q80, C83 to D122, R128 to F168, D179 to V220, T224 to K266, and G267 to H306. Residue S214 is modified to Phosphoserine. K311 is modified (N6-methyllysine). Residues S320 to P385 are required for nucleolar and nuclear location. Disordered stretches follow at residues D323 to T345 and L360 to P385. Phosphoserine is present on S361. Basic residues predominate over residues T372–P385.

Isoform 1 interacts (through WDR repeats) with NVL; the interaction is independent of RNA or pre-60S ribosome particles. Isoform 2 does not interact with NVL. Interacts with MTREX; the interaction dissociation in a late stage of rRNA synthesis is required for appropriate maturation of pre-60S particles and depends on the ATPase activity of NVL.

It is found in the nucleus. The protein localises to the nucleolus. Functionally, regulatory protein of the MTREX-exosome complex involved in the synthesis of the 60S ribosomal subunit. Participates in an early cleavage of the pre-rRNA processing pathway in cooperation with NVL. Required for blastocyst formation, is necessary for RNA transcription, processing and/or stability during preimplantation development. The chain is WD repeat-containing protein 74 (WDR74) from Homo sapiens (Human).